Here is a 207-residue protein sequence, read N- to C-terminus: A-type ATP synthase subunit E (207 aa).

The protein belongs to the V-ATPase E subunit family. As to quaternary structure, has multiple subunits with at least A(3), B(3), C, D, E, F, H, I and proteolipid K(x).

It is found in the cell membrane. Its function is as follows. Component of the A-type ATP synthase that produces ATP from ADP in the presence of a proton gradient across the membrane. The protein is A-type ATP synthase subunit E of Methanosphaera stadtmanae (strain ATCC 43021 / DSM 3091 / JCM 11832 / MCB-3).